Consider the following 401-residue polypeptide: Argininosuccinate synthase (401 aa).

ATP is bound at residue 8-16 (AYSGGLDTS). L-citrulline contacts are provided by Tyr86 and Ser91. Gly116 is an ATP binding site. Residues Thr118, Asn122, and Asp123 each contribute to the L-aspartate site. An L-citrulline-binding site is contributed by Asn122. The L-citrulline site is built by Arg126, Ser175, Ser184, Glu260, and Tyr272.

The protein belongs to the argininosuccinate synthase family. Type 1 subfamily. As to quaternary structure, homotetramer.

The protein localises to the cytoplasm. It carries out the reaction L-citrulline + L-aspartate + ATP = 2-(N(omega)-L-arginino)succinate + AMP + diphosphate + H(+). It functions in the pathway amino-acid biosynthesis; L-arginine biosynthesis; L-arginine from L-ornithine and carbamoyl phosphate: step 2/3. The sequence is that of Argininosuccinate synthase from Clostridium kluyveri (strain ATCC 8527 / DSM 555 / NBRC 12016 / NCIMB 10680 / K1).